Here is a 597-residue protein sequence, read N- to C-terminus: MQHIRNFSIIAHIDHGKSTLADRLIQRCGGLAAREMSAQVLDSMDIERERGITIKAQTAALEYKAQDGKVYNLNLIDTPGHVDFSYEVSRSLSACEGALLVVDASQGVEAQTVANCYTAIDLGVEVLAVLNKMDLPQADPEGARQEVEDVIGIDASDAVLASAKTGMGIDEILEAIVARVPSPEGDPEAALQALIIDSWFDNYVGVVMLVRIVNGVLRPKDKILLMASGATHLCEQTGVFTPKSQPRAQLSAGEVGFIIAGIKELAHAKVGDTITLAGKPAAAPLPGFKEVQPQVFAGLYPVESSEYDQLRDSLEKLKLNDAALMFEPEVSQALGFGFRCGFLGLLHMEIVQERLEREFDMDIITTAPSVVYEVVERDGTVLTIESPSRMPEVGKIAEIREPIVKVTLFMPQEYVGPVMTLCNNKRGNQINMTYHGRQVHLTYEIPLAEIVLDFFDRLKSVSRGYASMDYEFLEYRPADVVKVDLLINGDRVDALAMIVHRSNARYRARDVVSRMRALIPRQMYDVAIQAAIGAEVIARENVKALRKNVLAKCYGGDISRKKKLLEKQKAGKKRMKQVGTVEIPQEAFLAILQVEDK.

Residues 2-184 (QHIRNFSIIA…AIVARVPSPE (183 aa)) form the tr-type G domain. GTP-binding positions include 14–19 (DHGKST) and 131–134 (NKMD).

Belongs to the TRAFAC class translation factor GTPase superfamily. Classic translation factor GTPase family. LepA subfamily.

The protein resides in the cell inner membrane. It catalyses the reaction GTP + H2O = GDP + phosphate + H(+). Its function is as follows. Required for accurate and efficient protein synthesis under certain stress conditions. May act as a fidelity factor of the translation reaction, by catalyzing a one-codon backward translocation of tRNAs on improperly translocated ribosomes. Back-translocation proceeds from a post-translocation (POST) complex to a pre-translocation (PRE) complex, thus giving elongation factor G a second chance to translocate the tRNAs correctly. Binds to ribosomes in a GTP-dependent manner. This is Elongation factor 4 from Bordetella avium (strain 197N).